Reading from the N-terminus, the 301-residue chain is Cytosolic sulfotransferase 3 (301 aa).

Position 53-58 (53-58 (KAGTTW)) interacts with 3'-phosphoadenylyl sulfate. The active-site Proton acceptor is His115. Residues Arg137, Ser145, Tyr201, 235 to 240 (VQFDAM), and 263 to 265 (RKG) contribute to the 3'-phosphoadenylyl sulfate site.

Belongs to the sulfotransferase 1 family.

Its subcellular location is the cytoplasm. Its activity is regulated as follows. Inhibited by Hg(2+), Co(2+), Zn(2+), Cd(2+), Cu(2+) and Pb(2+) ions. Activated slightly by Mn(2+), Ca(2+) and Mg(2+) ions. Its function is as follows. Sulfotransferase that utilizes 3'-phospho-5'-adenylyl sulfate (PAPS) as sulfonate donor to catalyze the sulfate conjugation of a variety of xenobiotic and endogenous compounds, including dopamine, T3 (triiodo-L-thyronine), T4 (thyroxine), estrone, DHEA (dehydroepiandrosterone), flavonoids, isoflavonoids and other phenolic compounds. In Danio rerio (Zebrafish), this protein is Cytosolic sulfotransferase 3.